The following is a 121-amino-acid chain: Immunoglobulin heavy variable 6-1 (121 aa).

The signal sequence occupies residues 1-20; the sequence is MSVSFLIFLPVLGLPWGVLS. Residues 21-45 are framework-1; that stretch reads QVQLQQSGPGLVKPSQTLSLTCAIS. The region spanning 21-121 is the Ig-like domain; that stretch reads QVQLQQSGPG…EDTAVYYCAR (101 aa). Cys-42 and Cys-119 are oxidised to a cystine. The interval 46–55 is complementarity-determining-1; sequence GDSVSSNSAA. Positions 56 to 72 are framework-2; that stretch reads WNWIRQSPSRGLEWLGR. Residues 73–81 form a complementarity-determining-2 region; sequence TYYRSKWYN. Positions 82-119 are framework-3; that stretch reads DYAVSVKSRITINPDTSKNQFSLQLNSVTPEDTAVYYC. A complementarity-determining-3 region spans residues 120–121; the sequence is AR.

Immunoglobulins are composed of two identical heavy chains and two identical light chains; disulfide-linked.

It localises to the secreted. The protein localises to the cell membrane. In terms of biological role, v region of the variable domain of immunoglobulin heavy chains that participates in the antigen recognition. Immunoglobulins, also known as antibodies, are membrane-bound or secreted glycoproteins produced by B lymphocytes. In the recognition phase of humoral immunity, the membrane-bound immunoglobulins serve as receptors which, upon binding of a specific antigen, trigger the clonal expansion and differentiation of B lymphocytes into immunoglobulins-secreting plasma cells. Secreted immunoglobulins mediate the effector phase of humoral immunity, which results in the elimination of bound antigens. The antigen binding site is formed by the variable domain of one heavy chain, together with that of its associated light chain. Thus, each immunoglobulin has two antigen binding sites with remarkable affinity for a particular antigen. The variable domains are assembled by a process called V-(D)-J rearrangement and can then be subjected to somatic hypermutations which, after exposure to antigen and selection, allow affinity maturation for a particular antigen. This chain is Immunoglobulin heavy variable 6-1, found in Homo sapiens (Human).